Here is a 127-residue protein sequence, read N- to C-terminus: Large ribosomal subunit protein uL22 (127 aa).

The span at 106-117 shows a compositional bias: low complexity; sequence GAPEGVPVGGAV. The segment at 106 to 127 is disordered; the sequence is GAPEGVPVGGAVDTPGDEEEEE.

It belongs to the universal ribosomal protein uL22 family. Part of the 50S ribosomal subunit.

This protein binds specifically to 23S rRNA; its binding is stimulated by other ribosomal proteins, e.g. L4, L17, and L20. It is important during the early stages of 50S assembly. It makes multiple contacts with different domains of the 23S rRNA in the assembled 50S subunit and ribosome. Functionally, the globular domain of the protein is located near the polypeptide exit tunnel on the outside of the subunit, while an extended beta-hairpin is found that lines the wall of the exit tunnel in the center of the 70S ribosome. This Rubrobacter xylanophilus (strain DSM 9941 / JCM 11954 / NBRC 16129 / PRD-1) protein is Large ribosomal subunit protein uL22.